We begin with the raw amino-acid sequence, 288 residues long: Probable ketoamine kinase VV1_2562 (288 aa).

92–94 contributes to the ATP binding site; that stretch reads NFL. Asp195 acts as the Proton acceptor in catalysis.

The protein belongs to the fructosamine kinase family.

Functionally, ketoamine kinase that phosphorylates ketoamines on the third carbon of the sugar moiety to generate ketoamine 3-phosphate. The protein is Probable ketoamine kinase VV1_2562 of Vibrio vulnificus (strain CMCP6).